Here is a 417-residue protein sequence, read N- to C-terminus: Serine hydroxymethyltransferase (417 aa).

(6S)-5,6,7,8-tetrahydrofolate-binding positions include L121 and 125 to 127; that span reads GHL. The residue at position 229 (K229) is an N6-(pyridoxal phosphate)lysine. Position 355-357 (355-357) interacts with (6S)-5,6,7,8-tetrahydrofolate; sequence SPF.

Belongs to the SHMT family. Homodimer. It depends on pyridoxal 5'-phosphate as a cofactor.

The protein resides in the cytoplasm. The enzyme catalyses (6R)-5,10-methylene-5,6,7,8-tetrahydrofolate + glycine + H2O = (6S)-5,6,7,8-tetrahydrofolate + L-serine. It participates in one-carbon metabolism; tetrahydrofolate interconversion. Its pathway is amino-acid biosynthesis; glycine biosynthesis; glycine from L-serine: step 1/1. Catalyzes the reversible interconversion of serine and glycine with tetrahydrofolate (THF) serving as the one-carbon carrier. This reaction serves as the major source of one-carbon groups required for the biosynthesis of purines, thymidylate, methionine, and other important biomolecules. Also exhibits THF-independent aldolase activity toward beta-hydroxyamino acids, producing glycine and aldehydes, via a retro-aldol mechanism. The polypeptide is Serine hydroxymethyltransferase (Shewanella sp. (strain MR-4)).